A 419-amino-acid chain; its full sequence is Zinc metalloprotease RasP (419 aa).

4 helical membrane passes run 4–24 (VIAF…GHLI), 173–193 (IAAG…MLGL), 349–369 (LAAF…PALD), and 391–411 (EAFV…VVTW). His-18 is a Zn(2+) binding site. Residue Glu-19 is part of the active site. Residue His-22 participates in Zn(2+) binding. In terms of domain architecture, PDZ spans 184–269 (AYVILVMLGL…KLTKYVTPEA (86 aa)).

Belongs to the peptidase M50B family. Zn(2+) serves as cofactor.

The protein resides in the cell membrane. Its function is as follows. Is responsible for Site-2 cleavage of the RsiW anti-sigma factor. This results, after a third proteolytic step catalyzed by the ClpXP protease, in the release of SigW and the transcription activation of the genes under the control of the sigma-W factor. This chain is Zinc metalloprotease RasP (rasP), found in Bacillus licheniformis (strain ATCC 14580 / DSM 13 / JCM 2505 / CCUG 7422 / NBRC 12200 / NCIMB 9375 / NCTC 10341 / NRRL NRS-1264 / Gibson 46).